A 407-amino-acid chain; its full sequence is MLRWITAGESHGRALVALVDGMVAGVEVTSTEIADQLARRRLGYGRGARMAFERDAVTVLSGLRHGSTLGGPIAIEIGNTEWPKWEAVMAADPLDPAAAAELENSARNAPLTRPRPGHADYAGMLKYGFDDARPVLERASARETAARVAAGTVARAFLRQALGVEVLSHVVSIGASAPYDGPPPQPEDLPAIDASPVRAFDGQAEKSMIAEIEAAKKDGDTLGGVVEVVALGLPVGLGSFTSGENRLDSQLAAAVMGIQAIKGVEIGDGFETARRRGSRAHDEMYPGTDGVVRSTNRAGGLEGGMTNGQPLRVRAAMKPISTVPKALATVDLATGDEAVAIHQRSDVCAVPAAAVVVETMVALVLARVTLEKFGGDSLAETRRNIEAYQRSVADREAPAARARAIRG.

Residues Arg40 and Arg46 each contribute to the NADP(+) site. FMN is bound by residues 138–140 (RAS) and 259–260 (QA). Positions 275-284 (RRGSRAHDEM) are enriched in basic and acidic residues. The tract at residues 275-308 (RRGSRAHDEMYPGTDGVVRSTNRAGGLEGGMTNG) is disordered. Residues Gly303, 318-322 (KPIST), and Arg344 each bind FMN.

The protein belongs to the chorismate synthase family. In terms of assembly, homotetramer. Requires FMNH2 as cofactor.

It catalyses the reaction 5-O-(1-carboxyvinyl)-3-phosphoshikimate = chorismate + phosphate. The protein operates within metabolic intermediate biosynthesis; chorismate biosynthesis; chorismate from D-erythrose 4-phosphate and phosphoenolpyruvate: step 7/7. Catalyzes the anti-1,4-elimination of the C-3 phosphate and the C-6 proR hydrogen from 5-enolpyruvylshikimate-3-phosphate (EPSP) to yield chorismate, which is the branch point compound that serves as the starting substrate for the three terminal pathways of aromatic amino acid biosynthesis. This reaction introduces a second double bond into the aromatic ring system. This Mycobacterium marinum (strain ATCC BAA-535 / M) protein is Chorismate synthase.